The sequence spans 344 residues: L-rhamnose-proton symporter (344 aa).

Transmembrane regions (helical) follow at residues 4 to 24 (AITM…CFYA), 38 to 58 (WSVG…ALLL), 68 to 88 (FNLS…IGNI), 101 to 121 (MGIG…TPII), 137 to 157 (TLLG…AGQL), 175 to 195 (LLLA…MNAA), 214 to 234 (LPSY…FCFI), 259 to 279 (ILLS…YAWG), 290 to 310 (MSWM…GLVL), and 321 to 341 (VAVL…VGLG).

The protein belongs to the L-rhamnose transporter (TC 2.A.7.6) family.

It localises to the cell inner membrane. It catalyses the reaction L-rhamnopyranose(in) + H(+)(in) = L-rhamnopyranose(out) + H(+)(out). In terms of biological role, uptake of L-rhamnose across the cytoplasmic membrane with the concomitant transport of protons into the cell (symport system). The chain is L-rhamnose-proton symporter from Salmonella paratyphi A (strain ATCC 9150 / SARB42).